The following is a 530-amino-acid chain: Bifunctional purine biosynthesis protein PurH (530 aa).

An MGS-like domain is found at 1–148 (MNNARPIRRA…KNHKDVTIVV (148 aa)).

Belongs to the PurH family.

The catalysed reaction is (6R)-10-formyltetrahydrofolate + 5-amino-1-(5-phospho-beta-D-ribosyl)imidazole-4-carboxamide = 5-formamido-1-(5-phospho-D-ribosyl)imidazole-4-carboxamide + (6S)-5,6,7,8-tetrahydrofolate. The enzyme catalyses IMP + H2O = 5-formamido-1-(5-phospho-D-ribosyl)imidazole-4-carboxamide. It participates in purine metabolism; IMP biosynthesis via de novo pathway; 5-formamido-1-(5-phospho-D-ribosyl)imidazole-4-carboxamide from 5-amino-1-(5-phospho-D-ribosyl)imidazole-4-carboxamide (10-formyl THF route): step 1/1. The protein operates within purine metabolism; IMP biosynthesis via de novo pathway; IMP from 5-formamido-1-(5-phospho-D-ribosyl)imidazole-4-carboxamide: step 1/1. This is Bifunctional purine biosynthesis protein PurH from Vibrio atlanticus (strain LGP32) (Vibrio splendidus (strain Mel32)).